Here is a 354-residue protein sequence, read N- to C-terminus: Methylthioribose-1-phosphate isomerase (354 aa).

Substrate contacts are provided by residues 49–51, arginine 92, and glutamine 199; that span reads RGA. Aspartate 240 (proton donor) is an active-site residue. 250–251 contributes to the substrate binding site; that stretch reads NK.

The protein belongs to the eIF-2B alpha/beta/delta subunits family. MtnA subfamily.

The catalysed reaction is 5-(methylsulfanyl)-alpha-D-ribose 1-phosphate = 5-(methylsulfanyl)-D-ribulose 1-phosphate. Its pathway is amino-acid biosynthesis; L-methionine biosynthesis via salvage pathway; L-methionine from S-methyl-5-thio-alpha-D-ribose 1-phosphate: step 1/6. Its function is as follows. Catalyzes the interconversion of methylthioribose-1-phosphate (MTR-1-P) into methylthioribulose-1-phosphate (MTRu-1-P). In Koribacter versatilis (strain Ellin345), this protein is Methylthioribose-1-phosphate isomerase.